The primary structure comprises 384 residues: MSHHRRDSGGDVVHVIPTNNPPPDNWFPNLGDSAVWATEDDYNRAWAMNPDNTSGDNNGPPNKKTRGSPSSSSATTTSAASNRTKAIGKMFFKTKLCCKFRAGTCPYITNCNFAHTVEELRRPPPNWQEIVAAHEEERSGGMGTPTVSVVEIPREEFQIPSLVSSTAESGRSFKGRHCKKFYTEEGCPYGESCTFLHDEASRNRESVAISLGPGGYGSGGGGGSGGGSVGGGGSSSNVVVLGGGGGSGSGSGIQILKPSNWKTRICNKWEITGYCPFGAKCHFAHGAAELHRFGGGLVEEEGKDGVSPNPDTKQTVQNPKGLSDTTTLLSPGVPHNADASYHTGVALQRASSAVTQKPGIRTHQKWKGPAKISRIYGDWIDDIE.

Disordered stretches follow at residues 1 to 32 (MSHH…NLGD) and 46 to 81 (WAMN…SAAS). The segment covering 50-60 (PDNTSGDNNGP) has biased composition (polar residues). Low complexity predominate over residues 70-81 (SSSSATTTSAAS). 2 consecutive C3H1-type zinc fingers follow at residues 91–118 (FFKT…HTVE) and 172–200 (SFKG…HDEA). Residues 211-231 (LGPGGYGSGGGGGSGGGSVGG) form a disordered region. The segment covering 212 to 231 (GPGGYGSGGGGGSGGGSVGG) has biased composition (gly residues). The C3H1-type 3 zinc finger occupies 260 to 288 (NWKTRICNKWEITGYCPFGAKCHFAHGAA). Residues 299–335 (EEEGKDGVSPNPDTKQTVQNPKGLSDTTTLLSPGVPH) form a disordered region. The segment covering 309 to 329 (NPDTKQTVQNPKGLSDTTTLL) has biased composition (polar residues).

The polypeptide is Zinc finger CCCH domain-containing protein 12 (Arabidopsis thaliana (Mouse-ear cress)).